The chain runs to 127 residues: Riboflavin kinase (127 aa).

10–15 (GLGEGK) is a binding site for CDP. Mg(2+) contacts are provided by Thr-39 and Asn-41. FMN is bound by residues Thr-96 and Glu-104. A CDP-binding site is contributed by 109 to 112 (IQLR).

This sequence belongs to the archaeal riboflavin kinase family. The cofactor is Mg(2+).

It catalyses the reaction riboflavin + CTP = CDP + FMN + H(+). It functions in the pathway cofactor biosynthesis; FMN biosynthesis; FMN from riboflavin (CTP route): step 1/1. Functionally, catalyzes the CTP-dependent phosphorylation of riboflavin (vitamin B2) to form flavin mononucleotide (FMN). This chain is Riboflavin kinase, found in Methanococcus maripaludis (strain DSM 14266 / JCM 13030 / NBRC 101832 / S2 / LL).